We begin with the raw amino-acid sequence, 136 residues long: Histone H3 (136 aa).

The tract at residues 1–45 (MARTKQTARKSTGGKAPRKQLATKAARKSAPATGGVKKPHRYRPG) is disordered. Lysine 5 is subject to N6,N6,N6-trimethyllysine; alternate. Lysine 5 is subject to N6,N6-dimethyllysine; alternate. Residues lysine 5 and lysine 10 each carry the N6-methyllysine; alternate modification. An N6-acetyllysine; alternate modification is found at lysine 10. Residue serine 11 is modified to Phosphoserine. Residue lysine 15 is modified to N6,N6-dimethyllysine; alternate. An N6-methyllysine; alternate mark is found at lysine 15, lysine 19, lysine 24, lysine 28, and lysine 37. 5 positions are modified to N6-acetyllysine; alternate: lysine 15, lysine 19, lysine 24, lysine 28, and lysine 37. Lysine 28 and lysine 37 each carry N6,N6,N6-trimethyllysine; alternate. An N6,N6-dimethyllysine; alternate mark is found at lysine 28 and lysine 37. Residues lysine 57 and lysine 65 each carry the N6-acetyllysine modification. Lysine 80 carries the N6,N6,N6-trimethyllysine; alternate modification. Residue lysine 80 is modified to N6,N6-dimethyllysine; alternate. Lysine 80 carries the post-translational modification N6-methyllysine; alternate.

Belongs to the histone H3 family. In terms of assembly, the nucleosome is a histone octamer containing two molecules each of H2A, H2B, H3 and H4 assembled in one H3-H4 heterotetramer and two H2A-H2B heterodimers. The octamer wraps approximately 147 bp of DNA. Post-translationally, phosphorylated to form H3S10ph. H3S10ph promotes subsequent H3K14ac formation and is required for transcriptional activation through TBP recruitment to the promoters. In terms of processing, mono-, di- and trimethylated by the COMPASS complex to form H3K4me1/2/3. H3K4me activates gene expression by regulating transcription elongation and plays a role in telomere length maintenance. H3K4me enrichment correlates with transcription levels, and occurs in a 5' to 3' gradient with H3K4me3 enrichment at the 5'-end of genes, shifting to H3K4me2 and then H3K4me1. Methylated by SET2 to form H3K36me. H3K36me represses gene expression. Methylated by DOT1 to form H3K79me. H3K79me is required for association of SIR proteins with telomeric regions and for telomeric silencing. The COMPASS-mediated formation of H3K4me2/3 and the DOT1-mediated formation of H3K79me require H2BK123ub1. Acetylation of histone H3 leads to transcriptional activation. H3K14ac formation by GCN5 is promoted by H3S10ph. H3K14ac can also be formed by ESA1. H3K56ac formation occurs predominantly in newly synthesized H3 molecules during G1, S and G2/M of the cell cycle and may be involved in DNA repair.

It localises to the nucleus. Its subcellular location is the chromosome. In terms of biological role, core component of nucleosome. Nucleosomes wrap and compact DNA into chromatin, limiting DNA accessibility to the cellular machineries which require DNA as a template. Histones thereby play a central role in transcription regulation, DNA repair, DNA replication and chromosomal stability. DNA accessibility is regulated via a complex set of post-translational modifications of histones, also called histone code, and nucleosome remodeling. The polypeptide is Histone H3 (H3.1) (Mortierella alpina (Oleaginous fungus)).